The primary structure comprises 118 residues: Transcription factor PAR1 (118 aa).

The segment at 1–58 (MEETLATPDATRRSLSPSCSATVKSRAAGFERRTKRRLSETNASVREDREEAEEEEDE) is disordered. The span at 13–23 (RSLSPSCSATV) shows a compositional bias: polar residues. The region spanning 43–92 (ASVREDREEAEEEEDEVKEKIEALQRIIPGGAALGVDALFEETAGYILSL) is the bHLH domain.

It belongs to the bHLH protein family. As to quaternary structure, homodimer.

It localises to the nucleus. Functionally, atypical bHLH transcription factor that acts as a negative regulator of a variety of shade avoidance syndrome (SAS) responses, including seedling elongation and photosynthetic pigment accumulation. Acts as a direct transcriptional repressor of two auxin-responsive genes, SAUR15 and SAUR68. May function in integrating shade and hormone transcriptional networks in response to light and auxin changes. The polypeptide is Transcription factor PAR1 (PAR1) (Arabidopsis thaliana (Mouse-ear cress)).